A 396-amino-acid polypeptide reads, in one-letter code: Acetyl-CoA acetyltransferase (396 aa).

The active-site Acyl-thioester intermediate is Cys89. Residues 223–225 and Ser249 each bind CoA; that span reads RKS. Residues His352 and Cys382 each act as proton acceptor in the active site.

This sequence belongs to the thiolase-like superfamily. Thiolase family.

The protein resides in the cytoplasm. It catalyses the reaction 2 acetyl-CoA = acetoacetyl-CoA + CoA. It participates in lipid metabolism; butanoate metabolism. In terms of biological role, involved in syntrophic growth of S.wolfei with butyrate, as part of the butyrate oxidation pathway. Probably catalyzes the beta-keto thiolysis of acetoacetyl-CoA, leading to 2 acetyl-CoA molecules. In Syntrophomonas wolfei subsp. wolfei (strain DSM 2245B / Goettingen), this protein is Acetyl-CoA acetyltransferase.